The primary structure comprises 410 residues: MTEKLVLAYSGGLDTSVAIPWLKEKGYDVIAVVLNVGQHGKDMVAIQEKALKVGASQSIVIDAQAEFADQYVAPVIKANMLYEGEYPMVSALSRPLIIKKLVDIAHENEAVAIAHGSTGHGNDQVRFEAAIHALDPDMKIEAPIRDFQWSREEEIEYAQQHDVPVPINLESPYSIDENLWGRANEAGILENPWHQAPEDAYALTTAIENTPDIPEFVDVTFTAGIPTALDGNEMPLADLIIKLNIMAGTHGIGRIDHIENRLVGIKSREIYEAPAAAVLMTAHKDLEDLTLERDVAHFKPMVEQQLANLVYEAKWVSPLFDSLMAFVDETQKNVNGVVKMKLFKGSAIAVARQSEHNSLYDEDLATYTSASSFDQAAAVGFIKLWTLSNTVYEQVNHVHSQKPSQLKLKN.

ATP is bound at residue 8-16 (AYSGGLDTS). Tyr-86 serves as a coordination point for L-citrulline. Gly-116 lines the ATP pocket. Residues Thr-118, Asn-122, and Asp-123 each coordinate L-aspartate. Asn-122 lines the L-citrulline pocket. L-citrulline is bound by residues Arg-126, Ser-174, Glu-259, and Tyr-271.

It belongs to the argininosuccinate synthase family. Type 1 subfamily. In terms of assembly, homotetramer.

It localises to the cytoplasm. It carries out the reaction L-citrulline + L-aspartate + ATP = 2-(N(omega)-L-arginino)succinate + AMP + diphosphate + H(+). Its pathway is amino-acid biosynthesis; L-arginine biosynthesis; L-arginine from L-ornithine and carbamoyl phosphate: step 2/3. The polypeptide is Argininosuccinate synthase (Leuconostoc citreum (strain KM20)).